Reading from the N-terminus, the 237-residue chain is Phosphoribosylaminoimidazole-succinocarboxamide synthase (237 aa).

This sequence belongs to the SAICAR synthetase family.

The enzyme catalyses 5-amino-1-(5-phospho-D-ribosyl)imidazole-4-carboxylate + L-aspartate + ATP = (2S)-2-[5-amino-1-(5-phospho-beta-D-ribosyl)imidazole-4-carboxamido]succinate + ADP + phosphate + 2 H(+). It participates in purine metabolism; IMP biosynthesis via de novo pathway; 5-amino-1-(5-phospho-D-ribosyl)imidazole-4-carboxamide from 5-amino-1-(5-phospho-D-ribosyl)imidazole-4-carboxylate: step 1/2. This Listeria monocytogenes serovar 1/2a (strain ATCC BAA-679 / EGD-e) protein is Phosphoribosylaminoimidazole-succinocarboxamide synthase.